The following is a 1018-amino-acid chain: Cytadherence high molecular weight protein 1 (1018 aa).

Coiled coils occupy residues 782–815 (NRFL…AKDL) and 849–880 (ELVR…AVYK).

Post-translationally, phosphorylated mainly on serine residues.

Its subcellular location is the cell projection. It localises to the attachment organelle membrane. In terms of biological role, component of the cytoskeleton-like structure which stabilizes the shape of the wall-less Mycoplasma. This cytoskeleton-like network of accessory proteins containing HMW proteins 1 to 5 allows the proper anchoring of cytadhesin proteins in the mycoplasmal membrane at the attachment organelle. The polypeptide is Cytadherence high molecular weight protein 1 (hmw1) (Mycoplasma pneumoniae (strain ATCC 29342 / M129 / Subtype 1) (Mycoplasmoides pneumoniae)).